A 201-amino-acid polypeptide reads, in one-letter code: Protease (201 aa).

Residues histidine 53, aspartate 70, and cysteine 121 contribute to the active site.

Belongs to the peptidase C5 family. As to quaternary structure, interacts with protease cofactor pVI-C; this interaction is necessary for protease activation.

It is found in the virion. The protein resides in the host nucleus. The catalysed reaction is Cleaves proteins of the adenovirus and its host cell at two consensus sites: -Yaa-Xaa-Gly-Gly-|-Xaa- and -Yaa-Xaa-Gly-Xaa-|-Gly- (in which Yaa is Met, Ile or Leu, and Xaa is any amino acid).. Its activity is regulated as follows. Requires DNA and protease cofactor for maximal activation. Inside nascent virions, becomes partially activated by binding to the viral DNA, allowing it to cleave the cofactor that binds to the protease and fully activates it. Actin, like the viral protease cofactor, seems to act as a cofactor in the cleavage of cytokeratin 18 and of actin itself. Functionally, cleaves viral precursor proteins (pTP, pIIIa, pVI, pVII, pVIII, and pX) inside newly assembled particles giving rise to mature virions. Protease complexed to its cofactor slides along the viral DNA to specifically locate and cleave the viral precursors. Mature virions have a weakened organization compared to the unmature virions, thereby facilitating subsequent uncoating. Without maturation, the particle lacks infectivity and is unable to uncoat. Late in adenovirus infection, in the cytoplasm, may participate in the cytoskeleton destruction. Cleaves host cell cytoskeletal keratins K7 and K18. This is Protease from Equine adenovirus B serotype 2 (EAdV-2).